A 623-amino-acid chain; its full sequence is Chaperone protein HtpG (623 aa).

Residues 1 to 328 (MTQEKKKFDA…SEDLPLNISR (328 aa)) are a; substrate-binding. A b region spans residues 329 to 544 (ESLQHNSILD…ESAMDIRMER (216 aa)). The interval 545–623 (FLIEQKQIAN…DIVQKAILSL (79 aa)) is c.

The protein belongs to the heat shock protein 90 family. In terms of assembly, homodimer.

It localises to the cytoplasm. Molecular chaperone. Has ATPase activity. In Rickettsia canadensis (strain McKiel), this protein is Chaperone protein HtpG.